Consider the following 457-residue polypeptide: Protein translocase subunit SecY (457 aa).

The Cytoplasmic segment spans residues 1 to 20 (MGVIDVLAAVGERFPAVRKP). Residues 21 to 47 (ERKPTLYRRLAWTGVILVLYFIMSNIP) form a helical membrane-spanning segment. Topologically, residues 48-59 (LYGIPPQNIGGQ) are extracellular. The helical intramembrane region spans 60 to 67 (VDLQRIIF). A discontinuously helical transmembrane segment spans residues 60–88 (VDLQRIIFASSAGTLMELGIGPIVTASLI). An intramembrane segment occupies 68-79 (ASSAGTLMELGI). The segment at residues 80–88 (GPIVTASLI) is an intramembrane region (helical). The Cytoplasmic segment spans residues 89-109 (IQVLVGAKIIKLDLADPEGRR). The chain crosses the membrane as a helical span at residues 110 to 134 (KFTSAQKVLALAFAALEAVAFTVGG). The Extracellular portion of the chain corresponds to 135-146 (RYWVGTAIEPGP). The chain crosses the membrane as a helical span at residues 147-171 (LDYALVSLQLFLGALLVIYFDEVMQ). Residues 172–178 (KGWGIGS) are Cytoplasmic-facing. A helical transmembrane segment spans residues 179–197 (AISLFILAGVAQGVVWSIF). The Extracellular portion of the chain corresponds to 198–229 (GTIPGVAQDYGLVPAIISNPDLTLLARPNGFP). A helical transmembrane segment spans residues 230-251 (DLTGFFTTLAAIILLVYLQAMR). Over 252 to 276 (VEIPITSERFKGIRSRVPLQFIYVT) the chain is Cytoplasmic. A helical membrane pass occupies residues 277-298 (NIPILLVGILVSDLLLVQRLLA). Topologically, residues 299–332 (DYLGVESRAYQIYSSIVYYLSPPRGVVQSIADPV) are extracellular. A helical transmembrane segment spans residues 333-352 (KTAVFIASWTVLSIVFGYMW). The Cytoplasmic segment spans residues 353–395 (VEIAGLNPREQAERLIKGGLAIPGMRSDPRVLERVLRRYIYPL). Residues 396–414 (TFLSSLIVAALVIVADIFG) traverse the membrane as a helical segment. Residues 415–417 (AYG) are Extracellular-facing. Residues 418–432 (TGTGLLLAVGIINQY) form a helical membrane-spanning segment. Over 433–457 (YAMITRERALETYPLLRRILGEEVV) the chain is Cytoplasmic.

This sequence belongs to the SecY/SEC61-alpha family. In terms of assembly, component of the Sec protein translocase complex. Heterotrimer consisting of alpha (SecY), beta (SecG) and gamma (SecE) subunits. The heterotrimers can form oligomers, although 1 heterotrimer is thought to be able to translocate proteins. Interacts with the ribosome. May interact with SecDF, and other proteins may be involved.

It localises to the cell membrane. The central subunit of the protein translocation channel SecYEG. Consists of two halves formed by TMs 1-5 and 6-10. These two domains form a lateral gate at the front which open onto the bilayer between TMs 2 and 7, and are clamped together by SecE at the back. The channel is closed by both a pore ring composed of hydrophobic SecY resides and a short helix (helix 2A) on the extracellular side of the membrane which forms a plug. The plug probably moves laterally to allow the channel to open. The ring and the pore may move independently. This chain is Protein translocase subunit SecY, found in Aeropyrum pernix (strain ATCC 700893 / DSM 11879 / JCM 9820 / NBRC 100138 / K1).